Consider the following 132-residue polypeptide: Replication enhancer protein (132 aa).

Belongs to the geminiviridae replication enhancer protein family. Homooligomer. Interacts with the replication-associated protein (REP). Interacts with host proliferating cell nuclear antigen (PCNA). Interacts with host retinoblastoma-related protein 1 (RBR1), and may thereby deregulate the host cell cycle. Oligomerization and interaction with PCNA are necessary for optimal replication enhancement.

Its function is as follows. Increases viral DNA accumulation. Enhances infectivity and symptom expression. This Abutilon (Upland cotton) protein is Replication enhancer protein.